The sequence spans 841 residues: DNA mismatch repair protein MutS (841 aa).

ATP is bound at residue 600 to 607 (GPNMAGKS).

The protein belongs to the DNA mismatch repair MutS family.

Its function is as follows. This protein is involved in the repair of mismatches in DNA. It is possible that it carries out the mismatch recognition step. This protein has a weak ATPase activity. In Carboxydothermus hydrogenoformans (strain ATCC BAA-161 / DSM 6008 / Z-2901), this protein is DNA mismatch repair protein MutS.